The sequence spans 48 residues: MKRTYQPSKLKRAKTHGFMARMATAQGRKVLRQRRFKNRAQLTVSSER.

This sequence belongs to the bacterial ribosomal protein bL34 family.

This Mycoplasma genitalium (strain ATCC 33530 / DSM 19775 / NCTC 10195 / G37) (Mycoplasmoides genitalium) protein is Large ribosomal subunit protein bL34 (rpmH).